Reading from the N-terminus, the 128-residue chain is Ribosome-binding factor A (128 aa).

This sequence belongs to the RbfA family. Monomer. Binds 30S ribosomal subunits, but not 50S ribosomal subunits or 70S ribosomes.

It localises to the cytoplasm. One of several proteins that assist in the late maturation steps of the functional core of the 30S ribosomal subunit. Associates with free 30S ribosomal subunits (but not with 30S subunits that are part of 70S ribosomes or polysomes). Required for efficient processing of 16S rRNA. May interact with the 5'-terminal helix region of 16S rRNA. The sequence is that of Ribosome-binding factor A from Haemophilus influenzae (strain ATCC 51907 / DSM 11121 / KW20 / Rd).